The sequence spans 223 residues: Uracil-DNA glycosylase (223 aa).

The active-site Proton acceptor is aspartate 61.

The protein belongs to the uracil-DNA glycosylase (UDG) superfamily. UNG family.

The protein resides in the cytoplasm. The catalysed reaction is Hydrolyzes single-stranded DNA or mismatched double-stranded DNA and polynucleotides, releasing free uracil.. Functionally, excises uracil residues from the DNA which can arise as a result of misincorporation of dUMP residues by DNA polymerase or due to deamination of cytosine. The chain is Uracil-DNA glycosylase from Histophilus somni (strain 129Pt) (Haemophilus somnus).